A 365-amino-acid chain; its full sequence is tRNA(Met) cytidine acetate ligase (365 aa).

ATP contacts are provided by residues 7–20 (IAEF…HKYL), Gly96, Asn152, and Arg175.

It belongs to the TmcAL family.

The protein localises to the cytoplasm. It catalyses the reaction cytidine(34) in elongator tRNA(Met) + acetate + ATP = N(4)-acetylcytidine(34) in elongator tRNA(Met) + AMP + diphosphate. Functionally, catalyzes the formation of N(4)-acetylcytidine (ac(4)C) at the wobble position of elongator tRNA(Met), using acetate and ATP as substrates. First activates an acetate ion to form acetyladenylate (Ac-AMP) and then transfers the acetyl group to tRNA to form ac(4)C34. The sequence is that of tRNA(Met) cytidine acetate ligase from Streptococcus pneumoniae (strain ATCC 700669 / Spain 23F-1).